The following is a 660-amino-acid chain: DNA ligase (660 aa).

Residues 33–37, 82–83, and Glu-110 contribute to the NAD(+) site; these read DFVYD and SL. Lys-112 functions as the N6-AMP-lysine intermediate in the catalytic mechanism. Positions 133, 167, 281, and 305 each coordinate NAD(+). Zn(2+)-binding residues include Cys-396, Cys-399, Cys-412, and Cys-417. Residues 583–660 form the BRCT domain; sequence GENKLLAGKK…SFEDIKSYLD (78 aa).

It belongs to the NAD-dependent DNA ligase family. LigA subfamily. Mg(2+) serves as cofactor. The cofactor is Mn(2+).

The catalysed reaction is NAD(+) + (deoxyribonucleotide)n-3'-hydroxyl + 5'-phospho-(deoxyribonucleotide)m = (deoxyribonucleotide)n+m + AMP + beta-nicotinamide D-nucleotide.. Its function is as follows. DNA ligase that catalyzes the formation of phosphodiester linkages between 5'-phosphoryl and 3'-hydroxyl groups in double-stranded DNA using NAD as a coenzyme and as the energy source for the reaction. It is essential for DNA replication and repair of damaged DNA. In Borreliella burgdorferi (strain ZS7) (Borrelia burgdorferi), this protein is DNA ligase.